We begin with the raw amino-acid sequence, 989 residues long: MESFRQIKNNNVDLISNNDPLDKNRLLIEDLWESVLREECPDDQAERLIQLKELSYSKQIDGNSSKTFKNEIVDIVNSMDLAESIAAARAFSLYFQLVNILEQRVEEDRYIQSFTNKDVQKSPDNLDPFAPALARQNAPVTFRELFYRLRKLNVPPGKLEELLQEMDIRLVFTAHPTEIVRHTIRHKQTRVANLLKKIQIEQFLTKDEKISLKTQLKEEVRLWWRTDELHQFKPSVLDEVDYSLHYFQQVLFNAMPQLRGRITEALTENYPDVQLPPESFCNFGSWVGSDRDGNPSVTPDITWRTACYQRQLMLDRYIVATSNLRDQLSVSMQWSQVSSSLLESLETDRVKFPEIYEARATRYRSEPYRLKLSYILEKLRLTQERNNLLADSGWKFDFEGEIDNKNIDKVENLYYKSVNEFTYDLELIKNSLISTDLTCDSVNNLLTQVHIFGFSLASLDIRQESTRHSDAIQELTNYLDLSVQYDQMSEEEKIKWLIDELNTKRPLIPSDVNWTKTTEETFSVFKMVKRLQQEFGSRICHSYVISMSHSASDLLEVLLLAKEMGLLDQDSQKSKLLVVPLFETVEDLQRAPEVMEKLFKLDFYKSLLPKVGESFKPLQELMLGYSDSNKDSGFVSSNWEIHRAQIALQNLSSRNNILLRLFHGRGGSVGRGGGPAYQAILAQPSGTLKGRIKITEQGEVLASKYSLPELALYNLETVTTAVIQNSLVNSRLDATPEWNQLMSRLAETSRSHYRKLVHENPDLLNFFQEVTPIEEISKLQISSRPARRKKGAKDLSSLRAIPWVFGWTQSRFLLPSWFGVGTALSAELNSDPQQIELLRVLHQRWPFFRMLISKVEMTLSKVDLEVARYYVDTLGSKENKDSFDNIFEVISKEYNLTKSLILEITGKNKLLESDRDLKSSVSLRNKTIIPLGFLQVSLLRRLRDQTRQPPISEFLIDKDESRRAYSRSELLRGALLTINGIAAGMRNTG.

Residues histidine 175 and lysine 630 contribute to the active site.

The protein belongs to the PEPCase type 1 family. Mg(2+) serves as cofactor.

The enzyme catalyses oxaloacetate + phosphate = phosphoenolpyruvate + hydrogencarbonate. In terms of biological role, forms oxaloacetate, a four-carbon dicarboxylic acid source for the tricarboxylic acid cycle. The sequence is that of Phosphoenolpyruvate carboxylase from Prochlorococcus marinus (strain MIT 9301).